Consider the following 535-residue polypeptide: Light-independent protochlorophyllide reductase subunit B (535 aa).

Aspartate 36 is a [4Fe-4S] cluster binding site. Aspartate 292 acts as the Proton donor in catalysis. 428 to 429 serves as a coordination point for substrate; sequence GL. The interval 447 to 483 is disordered; the sequence is SDDAAKAEPDQPVSNAHGHTESKTVSQGEPIASDEGG.

It belongs to the ChlB/BchB/BchZ family. In terms of assembly, protochlorophyllide reductase is composed of three subunits; BchL, BchN and BchB. Forms a heterotetramer of two BchB and two BchN subunits. It depends on [4Fe-4S] cluster as a cofactor.

It catalyses the reaction chlorophyllide a + oxidized 2[4Fe-4S]-[ferredoxin] + 2 ADP + 2 phosphate = protochlorophyllide a + reduced 2[4Fe-4S]-[ferredoxin] + 2 ATP + 2 H2O. Its pathway is porphyrin-containing compound metabolism; bacteriochlorophyll biosynthesis (light-independent). Component of the dark-operative protochlorophyllide reductase (DPOR) that uses Mg-ATP and reduced ferredoxin to reduce ring D of protochlorophyllide (Pchlide) to form chlorophyllide a (Chlide). This reaction is light-independent. The NB-protein (BchN-BchB) is the catalytic component of the complex. The chain is Light-independent protochlorophyllide reductase subunit B from Chlorobium phaeobacteroides (strain DSM 266 / SMG 266 / 2430).